The following is a 773-amino-acid chain: Probable dipeptidyl peptidase 4 (773 aa).

The first 18 residues, 1–18 (MKLSVLSVLLVSVAQAAA), serve as a signal peptide directing secretion. 6 N-linked (GlcNAc...) asparagine glycosylation sites follow: Asn37, Asn80, Asn112, Asn220, Asn471, and Asn496. Ser619 (charge relay system) is an active-site residue. The N-linked (GlcNAc...) asparagine glycan is linked to Asn671. Residues Asp696 and His731 each act as charge relay system in the active site.

Belongs to the peptidase S9B family.

The protein localises to the secreted. The enzyme catalyses Release of an N-terminal dipeptide, Xaa-Yaa-|-Zaa-, from a polypeptide, preferentially when Yaa is Pro, provided Zaa is neither Pro nor hydroxyproline.. Extracellular dipeptidyl-peptidase which removes N-terminal dipeptides sequentially from polypeptides having unsubstituted N-termini provided that the penultimate residue is proline. The sequence is that of Probable dipeptidyl peptidase 4 (dpp4) from Emericella nidulans (strain FGSC A4 / ATCC 38163 / CBS 112.46 / NRRL 194 / M139) (Aspergillus nidulans).